Here is a 720-residue protein sequence, read N- to C-terminus: Phosphoribosylformylglycinamidine synthase subunit PurL (720 aa).

The active site involves His47. Positions 50 and 89 each coordinate ATP. Glu91 is a binding site for Mg(2+). Substrate-binding positions include 92–95 and Arg114; that span reads SHNH. The active-site Proton acceptor is His93. Asp115 is a binding site for Mg(2+). Gln238 lines the substrate pocket. Asp266 contacts Mg(2+). 310 to 312 serves as a coordination point for substrate; it reads ESQ. Positions 488 and 525 each coordinate ATP. Position 526 (Asn526) interacts with Mg(2+). A substrate-binding site is contributed by Ser528.

The protein belongs to the FGAMS family. In terms of assembly, monomer. Part of the FGAM synthase complex composed of 1 PurL, 1 PurQ and 2 PurS subunits.

Its subcellular location is the cytoplasm. It catalyses the reaction N(2)-formyl-N(1)-(5-phospho-beta-D-ribosyl)glycinamide + L-glutamine + ATP + H2O = 2-formamido-N(1)-(5-O-phospho-beta-D-ribosyl)acetamidine + L-glutamate + ADP + phosphate + H(+). It participates in purine metabolism; IMP biosynthesis via de novo pathway; 5-amino-1-(5-phospho-D-ribosyl)imidazole from N(2)-formyl-N(1)-(5-phospho-D-ribosyl)glycinamide: step 1/2. Its function is as follows. Part of the phosphoribosylformylglycinamidine synthase complex involved in the purines biosynthetic pathway. Catalyzes the ATP-dependent conversion of formylglycinamide ribonucleotide (FGAR) and glutamine to yield formylglycinamidine ribonucleotide (FGAM) and glutamate. The FGAM synthase complex is composed of three subunits. PurQ produces an ammonia molecule by converting glutamine to glutamate. PurL transfers the ammonia molecule to FGAR to form FGAM in an ATP-dependent manner. PurS interacts with PurQ and PurL and is thought to assist in the transfer of the ammonia molecule from PurQ to PurL. The polypeptide is Phosphoribosylformylglycinamidine synthase subunit PurL (Cereibacter sphaeroides (strain ATCC 17023 / DSM 158 / JCM 6121 / CCUG 31486 / LMG 2827 / NBRC 12203 / NCIMB 8253 / ATH 2.4.1.) (Rhodobacter sphaeroides)).